A 356-amino-acid polypeptide reads, in one-letter code: Protein trichome birefringence-like 41 (356 aa).

The helical; Signal-anchor for type II membrane protein transmembrane segment at 12–31 (SALVLSLLLLLLLPLLHEAA) threads the bilayer. Positions 107 to 109 (GDS) match the GDS motif motif. Residues 333-347 (DCSHWCLSGVPDTWN) carry the DCXHWCLPGXXDXWN motif motif.

This sequence belongs to the PC-esterase family. TBL subfamily.

The protein localises to the membrane. Functionally, may act as a bridging protein that binds pectin and other cell wall polysaccharides. Probably involved in maintaining esterification of pectins. May be involved in the specific O-acetylation of cell wall polymers. The sequence is that of Protein trichome birefringence-like 41 (TBL41) from Arabidopsis thaliana (Mouse-ear cress).